A 648-amino-acid polypeptide reads, in one-letter code: Pesticidal crystal protein Cry19Aa (648 aa).

It belongs to the delta endotoxin family.

Promotes colloidosmotic lysis by binding to the midgut epithelial cells of mosquitos. The polypeptide is Pesticidal crystal protein Cry19Aa (cry19Aa) (Bacillus thuringiensis subsp. jegathesan).